Here is a 456-residue protein sequence, read N- to C-terminus: Argininosuccinate lyase (456 aa).

The protein belongs to the lyase 1 family. Argininosuccinate lyase subfamily.

Its subcellular location is the cytoplasm. It carries out the reaction 2-(N(omega)-L-arginino)succinate = fumarate + L-arginine. It participates in amino-acid biosynthesis; L-arginine biosynthesis; L-arginine from L-ornithine and carbamoyl phosphate: step 3/3. The chain is Argininosuccinate lyase from Shewanella woodyi (strain ATCC 51908 / MS32).